Here is a 77-residue protein sequence, read N- to C-terminus: Acyl carrier protein (77 aa).

The 75-residue stretch at 1-75 (MVFEKVKDII…DVVNYIKAHT (75 aa)) folds into the Carrier domain. Ser35 is modified (O-(pantetheine 4'-phosphoryl)serine).

It belongs to the acyl carrier protein (ACP) family. Post-translationally, 4'-phosphopantetheine is transferred from CoA to a specific serine of apo-ACP by AcpS. This modification is essential for activity because fatty acids are bound in thioester linkage to the sulfhydryl of the prosthetic group.

It is found in the cytoplasm. The protein operates within lipid metabolism; fatty acid biosynthesis. In terms of biological role, carrier of the growing fatty acid chain in fatty acid biosynthesis. The protein is Acyl carrier protein of Clostridium acetobutylicum (strain ATCC 824 / DSM 792 / JCM 1419 / IAM 19013 / LMG 5710 / NBRC 13948 / NRRL B-527 / VKM B-1787 / 2291 / W).